Reading from the N-terminus, the 478-residue chain is Kynureninase (478 aa).

Residues Leu-150, Thr-151, 178–181 (FPSD), Ser-234, Asp-263, His-266, and Tyr-288 contribute to the pyridoxal 5'-phosphate site. Lys-289 bears the N6-(pyridoxal phosphate)lysine mark. Pyridoxal 5'-phosphate-binding residues include Trp-318 and Asn-346.

It belongs to the kynureninase family. In terms of assembly, homodimer. It depends on pyridoxal 5'-phosphate as a cofactor.

The protein localises to the cytoplasm. The catalysed reaction is L-kynurenine + H2O = anthranilate + L-alanine + H(+). The enzyme catalyses 3-hydroxy-L-kynurenine + H2O = 3-hydroxyanthranilate + L-alanine + H(+). It functions in the pathway amino-acid degradation; L-kynurenine degradation; L-alanine and anthranilate from L-kynurenine: step 1/1. It participates in cofactor biosynthesis; NAD(+) biosynthesis; quinolinate from L-kynurenine: step 2/3. Its function is as follows. Catalyzes the cleavage of L-kynurenine (L-Kyn) and L-3-hydroxykynurenine (L-3OHKyn) into anthranilic acid (AA) and 3-hydroxyanthranilic acid (3-OHAA), respectively. The sequence is that of Kynureninase from Caenorhabditis elegans.